The following is a 210-amino-acid chain: Outer-membrane lipoprotein carrier protein (210 aa).

The first 23 residues, 1–23 (MKKRIQKTILTVLFSSLSSIAFA), serve as a signal peptide directing secretion.

The protein belongs to the LolA family. As to quaternary structure, monomer.

The protein localises to the periplasm. Functionally, participates in the translocation of lipoproteins from the inner membrane to the outer membrane. Only forms a complex with a lipoprotein if the residue after the N-terminal Cys is not an aspartate (The Asp acts as a targeting signal to indicate that the lipoprotein should stay in the inner membrane). The chain is Outer-membrane lipoprotein carrier protein from Haemophilus ducreyi (strain 35000HP / ATCC 700724).